Reading from the N-terminus, the 87-residue chain is Large ribosomal subunit protein bL31B (87 aa).

It belongs to the bacterial ribosomal protein bL31 family. Type B subfamily. As to quaternary structure, part of the 50S ribosomal subunit.

This Burkholderia vietnamiensis (strain G4 / LMG 22486) (Burkholderia cepacia (strain R1808)) protein is Large ribosomal subunit protein bL31B.